A 175-amino-acid chain; its full sequence is Translation initiation factor IF-3 (175 aa).

It belongs to the IF-3 family. In terms of assembly, monomer.

It is found in the cytoplasm. IF-3 binds to the 30S ribosomal subunit and shifts the equilibrium between 70S ribosomes and their 50S and 30S subunits in favor of the free subunits, thus enhancing the availability of 30S subunits on which protein synthesis initiation begins. The polypeptide is Translation initiation factor IF-3 (Staphylococcus aureus (strain MRSA252)).